The sequence spans 367 residues: MFYWLIELSNTFPGFGAFRTFLNVFRYITFRTGGAVVTGALFVFLFGPWIIDHLRIRQGKGQPIRTDGPQSHLAKKGTPTMGGLMILSGLTVGTVLWANPLNPYVWIVLAVTLGFGFVGFYDDYLKVTKQTTTGFGSKLRLLIEAAIALVACYALVRLNRDPASTALTIPFLKDTVLHFGWFFVVFGAFVIVGAGNAVNLTDGLDGLAIVPVMIATASFAMIAYLAGNAVFADYLQIKYVAGTGELAVLCGALLGAGLGFLWFNAPPASIFMGDTGSLALGGMLGAIAVAVKHEIVLAVIGGLFVLEAVSVIVQVVSFKLTGKRIFRMAPIHHHFEQLGWTEPQIVIRFWIISVMLALAGLSTLKLR.

Helical transmembrane passes span 34–54 (GAVV…IDHL), 78–98 (TPTM…VLWA), 101–121 (LNPY…VGFY), 135–155 (FGSK…CYAL), 175–195 (TVLH…VGAG), 206–226 (GLAI…AYLA), 246–266 (LAVL…FNAP), 270–290 (IFMG…IAVA), 295–315 (IVLA…IVQV), and 344–364 (QIVI…LSTL).

The protein belongs to the glycosyltransferase 4 family. MraY subfamily. Requires Mg(2+) as cofactor.

The protein localises to the cell inner membrane. It carries out the reaction UDP-N-acetyl-alpha-D-muramoyl-L-alanyl-gamma-D-glutamyl-meso-2,6-diaminopimeloyl-D-alanyl-D-alanine + di-trans,octa-cis-undecaprenyl phosphate = di-trans,octa-cis-undecaprenyl diphospho-N-acetyl-alpha-D-muramoyl-L-alanyl-D-glutamyl-meso-2,6-diaminopimeloyl-D-alanyl-D-alanine + UMP. It participates in cell wall biogenesis; peptidoglycan biosynthesis. In terms of biological role, catalyzes the initial step of the lipid cycle reactions in the biosynthesis of the cell wall peptidoglycan: transfers peptidoglycan precursor phospho-MurNAc-pentapeptide from UDP-MurNAc-pentapeptide onto the lipid carrier undecaprenyl phosphate, yielding undecaprenyl-pyrophosphoryl-MurNAc-pentapeptide, known as lipid I. The sequence is that of Phospho-N-acetylmuramoyl-pentapeptide-transferase from Bradyrhizobium diazoefficiens (strain JCM 10833 / BCRC 13528 / IAM 13628 / NBRC 14792 / USDA 110).